A 323-amino-acid chain; its full sequence is GDP-L-fucose synthase 1 (323 aa).

Position 2 is an N-acetylalanine (A2). 23 to 29 (GHRGLVG) lines the NADP(+) pocket. Y149 acts as the Proton donor/acceptor in catalysis. NADP(+)-binding positions include K153, 176 to 179 (PTNL), and H192. The substrate site is built by R200, W215, R222, and D282.

The protein belongs to the NAD(P)-dependent epimerase/dehydratase family. Fucose synthase subfamily. In terms of assembly, binds and stabilizes MUR1. Homodimer. As to expression, highly expressed in roots and flowers, less abundant in leaves, stems and siliques.

It catalyses the reaction GDP-beta-L-fucose + NADP(+) = GDP-4-dehydro-alpha-D-rhamnose + NADPH + H(+). It functions in the pathway nucleotide-sugar biosynthesis; GDP-L-fucose biosynthesis via de novo pathway; GDP-L-fucose from GDP-alpha-D-mannose: step 2/2. Its function is as follows. Catalyzes the two-step NADP-dependent conversion of GDP-4-dehydro-6-deoxy-D-mannose to GDP-fucose, involving an epimerase and a reductase reaction. Not involved in the synthesis of GDP-L-galactose from GDP-D-mannose. The protein is GDP-L-fucose synthase 1 (GER1) of Arabidopsis thaliana (Mouse-ear cress).